Reading from the N-terminus, the 484-residue chain is Regulator of G-protein signaling 9 (484 aa).

In terms of domain architecture, DEP spans 30–105 (PDTGVKTQSQ…PDSSLYRFQT (76 aa)). The G protein gamma domain occupies 219–280 (ITAVKKEIMY…ITDDTQFWDL (62 aa)). Positions 299–414 (NFSELIRDPK…LKSPIYKEML (116 aa)) constitute an RGS domain.

As to quaternary structure, heterodimer with Gbeta5. Interacts with RGS7BP, leading to regulate the subcellular location of the heterodimer formed with Gbeta5. Component of the RGS9-1-Gbeta5 complex composed of RGS9 (RGS9-1), Gbeta5 (GNB5) and RGS9BP. Post-translationally, phosphorylation is decreased by light exposition.

The protein resides in the membrane. Inhibits signal transduction by increasing the GTPase activity of G protein alpha subunits thereby driving them into their inactive GDP-bound form. Binds to G(t)-alpha. Involved in phototransduction; key element in the recovery phase of visual transduction. The chain is Regulator of G-protein signaling 9 from Tamias striatus (Eastern chipmunk).